The primary structure comprises 465 residues: Presenilin spe-4 (465 aa).

The Cytoplasmic portion of the chain corresponds to 1 to 18; that stretch reads MDTLRSISSELVRSSQLR. A helical transmembrane segment spans residues 19–39; sequence WTLFSVIANMSLTLSIWIGVY. Residues 40 to 71 are Lumenal-facing; sequence NMEVNSELSKTYFLDPSFEQTTGNLLLDGFIN. A helical membrane pass occupies residues 72-92; sequence GVGTILVLGCVSFIMLAFVLF. Residues 93–96 lie on the Cytoplasmic side of the membrane; the sequence is DFRR. The chain crosses the membrane as a helical span at residues 97 to 117; it reads IVKAWLTLSCLLILFGVSAQT. Topologically, residues 118–136 are lumenal; it reads LHDMFSQVFDQDDNNQYYM. A helical membrane pass occupies residues 137–157; sequence TIVLIVVPTVVYGFGGIYAFF. The Cytoplasmic portion of the chain corresponds to 158–160; sequence SNS. Residues 161–181 traverse the membrane as a helical segment; sequence SLILHQIFVVTNCSLISVFYL. Residues 182–190 are Lumenal-facing; it reads RVFPSKTTW. Residues 191–211 traverse the membrane as a helical segment; sequence FVLWIVLFWDLFAVLAPMGPL. Aspartate 200 is a catalytic residue. Over 212 to 389 the chain is Cytoplasmic; that stretch reads KKVQEKASDY…DALNDGEVLR (178 aa). Residues 287–356 form a disordered region; sequence INPDSVPTEH…SDISTAEECD (70 aa). The span at 326–350 shows a compositional bias: low complexity; that stretch reads SETSSGSSNLSSSDSSTTVSTSDIS. The chain crosses the membrane as a helical span at residues 390–410; sequence LGFGDFVFYSLLIGQAAASGC. Aspartate 394 is a catalytic residue. Residue proline 411 is a topological domain, lumenal. The chain crosses the membrane as a helical span at residues 412 to 432; the sequence is FAVISAALGILFGLVVTLTVF. The Cytoplasmic portion of the chain corresponds to 433–439; it reads STEESTT. A PAL motif is present at residues 440–442; it reads PAL. The helical intramembrane region spans 440–460; sequence PALPLPVICGTFCYFSSMFFW. Residues 461–465 are Cytoplasmic-facing; the sequence is EQLYG.

Belongs to the peptidase A22A family. As to quaternary structure, homodimer. Potential component of the gamma-secretase complex, a complex probably composed of the presenilin homodimer (sel-12, hop-1 or spe-4), nicastrin (aph-2), aph-1 and pen-2.

The protein resides in the endoplasmic reticulum membrane. It localises to the golgi apparatus. The protein localises to the cis-Golgi network membrane. Its function is as follows. Potential catalytic subunit of the gamma-secretase complex during spermatogenesis, an endoprotease complex that catalyzes the intramembrane cleavage of integral membrane proteins such as Notch receptors (lin-12 or glp-1). Involved in spermatid formation during meiosis II. May be required for proper localization of macromolecules that are subject to asymmetric partitioning during spermatogenesis. This Caenorhabditis elegans protein is Presenilin spe-4.